The sequence spans 301 residues: 2-aminobenzoylacetyl-CoA thioesterase (301 aa).

H69, H71, D73, H74, H159, D178, and H221 together coordinate Fe cation.

The protein belongs to the metallo-beta-lactamase superfamily.

It catalyses the reaction (2-aminobenzoyl)acetyl-CoA + H2O = (2-aminobenzoyl)acetate + CoA + H(+). Thioesterase activity, but not pyocyanine production, is inhibited by 2-(pyridin-3-yl)benzoic acid, 2-(1H-pyrrol-1-yl)benzoic acid and 3-methylthiophene-2-carboxylic acid. Compounds bind to the active center. Required for the biosynthesis of the quorum-sensing signaling molecules 2-heptyl-4(1H)-quinolone (HHQ) and 2-heptyl-3-hydroxy-4(1H)-quinolone (Pseudomonas quinolone signal or PQS), which are important for biofilm formation and virulence. Catalyzes the hydrolysis of the intermediate 2-aminobenzoylacetyl-CoA (2-ABA-CoA) to form 2-aminobenzoylacetate (2-ABA), the precursor of HHQ. In vitro, can also hydrolyze other substrates such as S-ethyl-acetothioacetate and acetoacetyl-CoA, but is inactive against anthraniloyl-CoA, malonyl-CoA and octanoyl-CoA. Beyond its thioesterase function, is involved in the regulation of diverse genes coding for key virulence determinants and biofilm development. The protein is 2-aminobenzoylacetyl-CoA thioesterase of Pseudomonas aeruginosa (strain ATCC 15692 / DSM 22644 / CIP 104116 / JCM 14847 / LMG 12228 / 1C / PRS 101 / PAO1).